Consider the following 360-residue polypeptide: Photosystem II protein D1 (360 aa).

The next 3 membrane-spanning stretches (helical) occupy residues 30–47 (YVGWFGVLMIPCLLTAAA), 119–134 (HFLIGISAYMGRQWEL), and 143–157 (WICVAYSAPVSAAFA). His-119 contacts chlorophyll a. Pheophytin a is bound at residue Tyr-127. [CaMn4O5] cluster-binding residues include Asp-171 and Glu-190. A helical membrane pass occupies residues 198–219 (FHMAGVAGMFGGSLFSAMHGSL). His-199 is a chlorophyll a binding site. A quinone contacts are provided by residues His-216 and 265–266 (SF). A Fe cation-binding site is contributed by His-216. His-273 contributes to the Fe cation binding site. A helical transmembrane segment spans residues 275 to 289 (FLAVFPVVCVWLTSM). His-333, Glu-334, Asp-343, and Ala-345 together coordinate [CaMn4O5] cluster. Residues 346–360 (AAESTTVALSAPAIG) constitute a propeptide that is removed on maturation.

Belongs to the reaction center PufL/M/PsbA/D family. As to quaternary structure, PSII is composed of 1 copy each of membrane proteins PsbA, PsbB, PsbC, PsbD, PsbE, PsbF, PsbH, PsbI, PsbJ, PsbK, PsbL, PsbM, PsbT, PsbX, PsbY, Psb30/Ycf12, peripheral proteins PsbO, CyanoQ (PsbQ), PsbU, PsbV and a large number of cofactors. It forms dimeric complexes. The D1/D2 heterodimer binds P680, chlorophylls that are the primary electron donor of PSII, and subsequent electron acceptors. It shares a non-heme iron and each subunit binds pheophytin, quinone, additional chlorophylls, carotenoids and lipids. D1 provides most of the ligands for the Mn4-Ca-O5 cluster of the oxygen-evolving complex (OEC). There is also a Cl(-1) ion associated with D1 and D2, which is required for oxygen evolution. The PSII complex binds additional chlorophylls, carotenoids and specific lipids. serves as cofactor. Tyr-162 forms a radical intermediate that is referred to as redox-active TyrZ, YZ or Y-Z. Post-translationally, C-terminally processed by CtpA; processing is essential to allow assembly of the oxygen-evolving complex and thus photosynthetic growth.

Its subcellular location is the cellular thylakoid membrane. It catalyses the reaction 2 a plastoquinone + 4 hnu + 2 H2O = 2 a plastoquinol + O2. Functionally, photosystem II (PSII) is a light-driven water:plastoquinone oxidoreductase that uses light energy to abstract electrons from H(2)O, generating O(2) and a proton gradient subsequently used for ATP formation. It consists of a core antenna complex that captures photons, and an electron transfer chain that converts photonic excitation into a charge separation. The D1/D2 (PsbA/PsbD) reaction center heterodimer binds P680, the primary electron donor of PSII as well as several subsequent electron acceptors. This Prochlorococcus marinus (strain MIT 9301) protein is Photosystem II protein D1.